The sequence spans 145 residues: Alpha-amylase/trypsin inhibitor CMa (145 aa).

A signal peptide spans 1–25 (MASKSSITPLLLAAVLASVFAAATA).

It belongs to the protease inhibitor I6 (cereal trypsin/alpha-amylase inhibitor) family. Heterotetramer of one CMa, one CMb and two CMd chains. Post-translationally, five disulfide bonds, which are essential for the inhibitor activity, are probably present. Endosperm.

The protein resides in the secreted. Its function is as follows. Alpha-amylase/trypsin inhibitor. It could be involved in insect defense mechanisms. This is Alpha-amylase/trypsin inhibitor CMa (IAT1) from Hordeum vulgare (Barley).